A 127-amino-acid polypeptide reads, in one-letter code: Protein ApaG (127 aa).

One can recognise an ApaG domain in the interval 3 to 127 (DQPPTEIQIS…FRLAAATVFH (125 aa)).

This Acidithiobacillus ferrooxidans (strain ATCC 23270 / DSM 14882 / CIP 104768 / NCIMB 8455) (Ferrobacillus ferrooxidans (strain ATCC 23270)) protein is Protein ApaG.